Here is a 299-residue protein sequence, read N- to C-terminus: NEDD8-activating enzyme E1 catalytic subunit (299 aa).

12–37 (GLGCEILKNLTMLSFVKQVHIVDIDT) is an ATP binding site. Cys168 functions as the Glycyl thioester intermediate in the catalytic mechanism.

It belongs to the ubiquitin-activating E1 family. UBA3 subfamily. In terms of assembly, heterodimer of UBA3 and ULA1. Interacts with NEDD8 and UBC12.

The catalysed reaction is ATP + [NEDD8 protein] + [E1 NEDD8-activating enzyme]-L-cysteine = AMP + diphosphate + [E1 NEDD8-activating enzyme]-S-[NEDD8 protein]-yl-L-cysteine.. It participates in protein modification; protein neddylation. Functionally, catalytic subunit of the dimeric UBA3-ULA1 E1 enzyme. E1 activates NEDD8/RUB1 by first adenylating its C-terminal glycine residue with ATP, thereafter linking this residue to the side chain of the catalytic cysteine, yielding a NEDD8-UBA3 thioester and free AMP. E1 finally transfers NEDD8 to the catalytic cysteine of UBC12. The chain is NEDD8-activating enzyme E1 catalytic subunit (UBA3) from Saccharomyces cerevisiae (strain ATCC 204508 / S288c) (Baker's yeast).